A 420-amino-acid chain; its full sequence is Pregnancy-associated glycoprotein 2 (420 aa).

Residues 1–15 (MKWLVILGLVALSDC) form the signal peptide. 2 N-linked (GlcNAc...) asparagine glycosylation sites follow: asparagine 56 and asparagine 79. Positions 76-417 (YVGNISIGTP…DEGQNRIGLA (342 aa)) constitute a Peptidase A1 domain. Aspartate 94 is a catalytic residue. Cystine bridges form between cysteine 107-cysteine 112 and cysteine 268-cysteine 272. Residue aspartate 277 is part of the active site. A disulfide bridge links cysteine 341 with cysteine 376.

This sequence belongs to the peptidase A1 family. In terms of tissue distribution, expressed throughout the chorion, with the signal localized exclusively over the trophectoderm.

Its subcellular location is the secreted. The protein resides in the extracellular space. The sequence is that of Pregnancy-associated glycoprotein 2 (PAG2) from Sus scrofa (Pig).